A 798-amino-acid polypeptide reads, in one-letter code: Tripartite terminase subunit 1 (798 aa).

A C3H1-type zinc finger spans residues Cys-191–His-219. Over residues Ala-416–Gly-429 the composition is skewed to low complexity. Residues Ala-416 to Ala-458 form a disordered region. Positions Ala-430–Gly-452 are enriched in gly residues. Tyr-674–Gln-681 contacts ATP.

This sequence belongs to the herpesviridae TRM1 protein family. Associates with TRM2 and TRM3 to form the tripartite terminase complex. Interacts with portal protein.

Its subcellular location is the host nucleus. Component of the molecular motor that translocates viral genomic DNA in empty capsid during DNA packaging. Forms a tripartite terminase complex together with TRM2 and TRM3 in the host cytoplasm. Once the complex reaches the host nucleus, it interacts with the capsid portal vertex. This portal forms a ring in which genomic DNA is translocated into the capsid. TRM1 carries an endonuclease activity that plays an important role for the cleavage of concatemeric viral DNA into unit length genomes. This is Tripartite terminase subunit 1 from Murid herpesvirus 1 (strain Smith) (MuHV-1).